The following is a 931-amino-acid chain: Isoleucine--tRNA ligase (931 aa).

Residues 58–68 (PYANGHLHCGH) carry the 'HIGH' region motif. Glu-559 contributes to the L-isoleucyl-5'-AMP binding site. The 'KMSKS' region motif lies at 600–604 (KLSKS). ATP is bound at residue Lys-603. The Zn(2+) site is built by Cys-894, Cys-897, Cys-914, and Cys-917.

The protein belongs to the class-I aminoacyl-tRNA synthetase family. IleS type 1 subfamily. As to quaternary structure, monomer. Zn(2+) is required as a cofactor.

The protein resides in the cytoplasm. The enzyme catalyses tRNA(Ile) + L-isoleucine + ATP = L-isoleucyl-tRNA(Ile) + AMP + diphosphate. Functionally, catalyzes the attachment of isoleucine to tRNA(Ile). As IleRS can inadvertently accommodate and process structurally similar amino acids such as valine, to avoid such errors it has two additional distinct tRNA(Ile)-dependent editing activities. One activity is designated as 'pretransfer' editing and involves the hydrolysis of activated Val-AMP. The other activity is designated 'posttransfer' editing and involves deacylation of mischarged Val-tRNA(Ile). In Legionella pneumophila (strain Lens), this protein is Isoleucine--tRNA ligase.